We begin with the raw amino-acid sequence, 94 residues long: Large ribosomal subunit protein uL23 (94 aa).

It belongs to the universal ribosomal protein uL23 family. In terms of assembly, part of the 50S ribosomal subunit. Contacts protein L29, and trigger factor when it is bound to the ribosome.

One of the early assembly proteins it binds 23S rRNA. One of the proteins that surrounds the polypeptide exit tunnel on the outside of the ribosome. Forms the main docking site for trigger factor binding to the ribosome. This Dehalococcoides mccartyi (strain ATCC BAA-2266 / KCTC 15142 / 195) (Dehalococcoides ethenogenes (strain 195)) protein is Large ribosomal subunit protein uL23.